Consider the following 577-residue polypeptide: DNA-directed RNA polymerase subunit alpha (577 aa).

The segment at 1–461 (MIKIIIKETF…QLFLPLQQIR (461 aa)) is alpha N-terminal domain (alpha-NTD). The interval 510–577 (FDHRLLELDI…ALQLMKLTLK (68 aa)) is alpha C-terminal domain (alpha-CTD).

This sequence belongs to the RNA polymerase alpha chain family. As to quaternary structure, in plastids the minimal PEP RNA polymerase catalytic core is composed of four subunits: alpha, beta, beta', and beta''. When a (nuclear-encoded) sigma factor is associated with the core the holoenzyme is formed, which can initiate transcription.

The protein resides in the plastid. The protein localises to the chloroplast. The enzyme catalyses RNA(n) + a ribonucleoside 5'-triphosphate = RNA(n+1) + diphosphate. Functionally, DNA-dependent RNA polymerase catalyzes the transcription of DNA into RNA using the four ribonucleoside triphosphates as substrates. This is DNA-directed RNA polymerase subunit alpha from Tupiella akineta (Green alga).